The chain runs to 1107 residues: Phospholipid-transporting ATPase 2 (1107 aa).

Residues 1 to 33 are Cytoplasmic-facing; it reads MKRFVYINDDEASKELCCDNRISNRKYTLWNFL. A helical membrane pass occupies residues 34–55; the sequence is PKNLWEQFSRFMNQYFLLIACL. Residues 56–60 are Extracellular-facing; the sequence is QLWSL. The chain crosses the membrane as a helical span at residues 61–83; it reads ITPVNPASTWGPLIFIFAVSASK. Residues 84 to 268 lie on the Cytoplasmic side of the membrane; the sequence is EAWDDYHRYL…TAMDAMIDKL (185 aa). The helical transmembrane segment at 269 to 290 threads the bilayer; it reads TGAIFVFQIVVVLVLGIAGNVW. Topologically, residues 291–315 are extracellular; that stretch reads KDTEARKQWYVQYPEEAPWYELLVI. A helical transmembrane segment spans residues 316–333; sequence PLRFELLCSIMIPISIKV. The Cytoplasmic portion of the chain corresponds to 334-807; the sequence is SLDLVKGLYA…HGRYSYNRTA (474 aa). Aspartate 381 (4-aspartylphosphate intermediate) is an active-site residue. Mg(2+) is bound by residues aspartate 752 and aspartate 756. The chain crosses the membrane as a helical span at residues 808 to 827; sequence FLSQYSFYKSLLICFIQIFF. Residues 828 to 841 lie on the Extracellular side of the membrane; it reads SFISGVSGTSLFNS. Residues 842 to 860 traverse the membrane as a helical segment; that stretch reads VSLMAYNVFYTSVPVLVSV. Over 861 to 890 the chain is Cytoplasmic; the sequence is IDKDLSEASVMQHPQILFYCQAGRLLNPST. The helical transmembrane segment at 891-912 threads the bilayer; it reads FAGWFGRSLFHAIIVFVITIHA. The Extracellular segment spans residues 913-919; it reads YAYEKSE. A helical membrane pass occupies residues 920–942; the sequence is MEELGMVALSGCIWLQAFVVAQE. The Cytoplasmic segment spans residues 943 to 948; the sequence is TNSFTV. The helical transmembrane segment at 949–969 threads the bilayer; that stretch reads LQHLSIWGNLVGFYAINFLFS. Over 970–982 the chain is Extracellular; the sequence is AIPSSGMYTIMFR. The chain crosses the membrane as a helical span at residues 983 to 1007; sequence LCSQPSYWITMFLIVGAGMGPIFAL. The Cytoplasmic portion of the chain corresponds to 1008-1107; it reads KYFRYTYRPS…SGYTRNCKDN (100 aa). Residues 1048 to 1075 form a disordered region; that stretch reads DLSPISITQPKNRSPVYEPLLSDSPNAT. The residue at position 1050 (serine 1050) is a Phosphoserine.

This sequence belongs to the cation transport ATPase (P-type) (TC 3.A.3) family. Type IV subfamily. As to quaternary structure, interacts with ALIS1, ALIS3 and ALIS5 in a heterologous system.

The protein resides in the endoplasmic reticulum membrane. Its subcellular location is the prevacuolar compartment membrane. It carries out the reaction ATP + H2O + phospholipidSide 1 = ADP + phosphate + phospholipidSide 2.. Functionally, involved in transport of phospholipids. Contributes to transmembrane flipping of lipids. Requires an interaction with a protein of the ALIS family for activity. Specific for phosphatidylserine and has no activity with lysolipid, phosphatidylcholine or phosphatidylethanolamine. The protein is Phospholipid-transporting ATPase 2 of Arabidopsis thaliana (Mouse-ear cress).